A 407-amino-acid polypeptide reads, in one-letter code: Peptidase T (407 aa).

His82 contributes to the Zn(2+) binding site. Asp84 is a catalytic residue. Asp143 contacts Zn(2+). Glu177 serves as the catalytic Proton acceptor. Glu178, Asp200, and His382 together coordinate Zn(2+).

The protein belongs to the peptidase M20B family. Zn(2+) serves as cofactor.

The protein localises to the cytoplasm. It carries out the reaction Release of the N-terminal residue from a tripeptide.. Functionally, cleaves the N-terminal amino acid of tripeptides. The polypeptide is Peptidase T (Streptococcus equi subsp. equi (strain 4047)).